The following is a 339-amino-acid chain: Phosphate acyltransferase (339 aa).

This sequence belongs to the PlsX family. As to quaternary structure, homodimer. Probably interacts with PlsY.

Its subcellular location is the cytoplasm. It carries out the reaction a fatty acyl-[ACP] + phosphate = an acyl phosphate + holo-[ACP]. Its pathway is lipid metabolism; phospholipid metabolism. In terms of biological role, catalyzes the reversible formation of acyl-phosphate (acyl-PO(4)) from acyl-[acyl-carrier-protein] (acyl-ACP). This enzyme utilizes acyl-ACP as fatty acyl donor, but not acyl-CoA. The sequence is that of Phosphate acyltransferase from Clostridium perfringens (strain ATCC 13124 / DSM 756 / JCM 1290 / NCIMB 6125 / NCTC 8237 / Type A).